A 242-amino-acid polypeptide reads, in one-letter code: Transcriptional activator protein BjaR1 (242 aa).

In terms of domain architecture, HTH luxR-type spans 173-238 (TPYPSTRLTP…HAVALAIRHK (66 aa)). Positions 197-216 (AWEIGEILHITQRTAEEHLA) form a DNA-binding region, H-T-H motif.

This sequence belongs to the autoinducer-regulated transcriptional regulatory protein family.

Transcriptional activator that functions in response to the quorum-sensing autoinducer IV-HSL (isovaleryl-homoserine lactone). Activates BjaI expression. Is sensitive to IV-HSL at concentrations as low as 10 pM. The protein is Transcriptional activator protein BjaR1 (bjaR1) of Bradyrhizobium diazoefficiens (strain JCM 10833 / BCRC 13528 / IAM 13628 / NBRC 14792 / USDA 110).